Consider the following 172-residue polypeptide: RNA pyrophosphohydrolase (172 aa).

The Nudix hydrolase domain occupies 6–149 (GYRPNVGIIL…KRDVYRMALK (144 aa)). Residues 38-59 (GGIKYGESPEQAMYRELMEEVG) carry the Nudix box motif.

Belongs to the Nudix hydrolase family. RppH subfamily. Requires a divalent metal cation as cofactor.

Its function is as follows. Accelerates the degradation of transcripts by removing pyrophosphate from the 5'-end of triphosphorylated RNA, leading to a more labile monophosphorylated state that can stimulate subsequent ribonuclease cleavage. In Methylobacillus flagellatus (strain ATCC 51484 / DSM 6875 / VKM B-1610 / KT), this protein is RNA pyrophosphohydrolase.